We begin with the raw amino-acid sequence, 132 residues long: Agouti-signaling protein (132 aa).

Positions 1-22 (MDVTRLLLATLLVFLCFFTANS) are cleaved as a signal peptide. Residue Asn-39 is glycosylated (N-linked (GlcNAc...) asparagine). Residues 61–87 (QIGRKEAEKKRSSKKEASMKKVARPRT) are disordered. Basic and acidic residues predominate over residues 63–79 (GRKEAEKKRSSKKEASM). 5 disulfide bridges follow: Cys-93-Cys-108, Cys-100-Cys-114, Cys-107-Cys-125, Cys-111-Cys-132, and Cys-116-Cys-123. Residues 93–132 (CVATRNSCKPPAPACCDPCASCQCRFFRSACSCRVLSLNC) enclose the Agouti domain.

It is found in the secreted. Its function is as follows. Involved in the regulation of melanogenesis. The binding of ASP to MC1R precludes alpha-MSH initiated signaling and thus blocks production of cAMP, leading to a down-regulation of eumelanogenesis (brown/black pigment) and thus increasing synthesis of pheomelanin (yellow/red pigment). In Gorilla gorilla gorilla (Western lowland gorilla), this protein is Agouti-signaling protein (ASIP).